The chain runs to 660 residues: MEMTSTSLKRGCLVVEDNDSVTPHDETKKQKVSEGCLTSSQDGVENDGLHRSENEPGPPEAESTVKDDENSSAQVQEEEEEEEEEDGLSEAGEEEEAESFADMMKHGLTELDVGICKFVSSHHGFSGILKERYSDFVVHEIGKDGRISHLDDLSVPVDEEDPPEDALTVLTAEDRQQLEELQLFKNKETSVAIEVIEDTKEKRTVIHQAIKSLFPGLETKTEDREGRKYIVAYHAAGKKALANPRKHSWPKSRGSYCHFVLYKENKDTMDAINVLSKYLRVKPNIFSYMGTKDKRAITVQEIAVLKISAQRLAHLNKCLMNLKLGNFSYQKTPLKLGALQGNHFTVVLRNITGTDEQVQQAMQSLRETGFINYYGMQRFGTTAVPTYQVGRAILQNSWTEVMDLILKPRSGAEKGYLVKCREEWAKTKDPASALKKLPVKRCVEGQLLRGLSRYGMKNIVSAFGIIPRNNRLMYIHSYQSYVWNTMVSRRIEEYGLRPVPGDLVLKGATPTYIEEDDVDNYSIHDVVMPLPGFDVIYPKHKISEAYREMLAADNLDIDNMRHTIRDYSLSGAYRRIIIRPQSVSWEVVAYDDPKIPLFNTDVDNLEGKPPPVFASEGKYRALKMDFSLPPSTYATMAIREVLKMDTSIKNQTQLNTSWLR.

Residues 1 to 99 (MEMTSTSLKR…EAGEEEEAES (99 aa)) are disordered. The residue at position 7 (Ser-7) is a Phosphoserine. A compositionally biased stretch (basic and acidic residues) spans 22-32 (TPHDETKKQKV). The span at 76–99 (QEEEEEEEEEDGLSEAGEEEEAES) shows a compositional bias: acidic residues. A Phosphoserine modification is found at Ser-126. Catalysis depends on Asp-293, which acts as the Nucleophile. The TRUD domain occupies 369-579 (GFINYYGMQR…SGAYRRIIIR (211 aa)).

Belongs to the pseudouridine synthase TruD family. Interacts with SIRT1.

It localises to the nucleus. It catalyses the reaction a uridine in tRNA = a pseudouridine in tRNA. The catalysed reaction is uridine(13) in tRNA = pseudouridine(13) in tRNA. The enzyme catalyses a uridine in mRNA = a pseudouridine in mRNA. In terms of biological role, pseudouridylate synthase that catalyzes pseudouridylation of RNAs. Acts as a regulator of protein synthesis in embryonic stem cells by mediating pseudouridylation of RNA fragments derived from tRNAs (tRFs): pseudouridylated tRFs inhibit translation by targeting the translation initiation complex. Also catalyzes pseudouridylation of mRNAs: mediates pseudouridylation of mRNAs with the consensus sequence 5'-UGUAG-3'. Acts as a regulator of pre-mRNA splicing by mediating pseudouridylation of pre-mRNAs at locations associated with alternatively spliced regions. Pseudouridylation of pre-mRNAs near splice sites directly regulates mRNA splicing and mRNA 3'-end processing. In addition to mRNAs and tRNAs, binds other types of RNAs, such as snRNAs, Y RNAs and vault RNAs, suggesting that it can catalyze pseudouridylation of many RNA types. The polypeptide is Pseudouridylate synthase 7 homolog (Mus musculus (Mouse)).